The primary structure comprises 167 residues: Thioredoxin M-type, chloroplastic (167 aa).

The N-terminal 53 residues, 1–53 (MAMETCFRAWALHAPAGSKDRLLVGNLVLPSKRALAPLSVGRVATRRPRHVCQ), are a transit peptide targeting the chloroplast. The Thioredoxin domain occupies 54-165 (SKNAVDEVVV…LTTLIDKYIG (112 aa)). The cysteines at positions 89 and 92 are disulfide-linked.

The protein belongs to the thioredoxin family. Plant M-type subfamily. In terms of assembly, forms a complex with heterodimeric ferredoxin-thioredoxin reductase (FTR) and ferredoxin.

It localises to the plastid. The protein resides in the chloroplast. Functionally, participates in various redox reactions through the reversible oxidation of the active center dithiol to a disulfide. The M form is known to activate NADP-malate dehydrogenase. The sequence is that of Thioredoxin M-type, chloroplastic (TRM1) from Zea mays (Maize).